The chain runs to 396 residues: Elongation factor Tu (396 aa).

The tr-type G domain occupies 10 to 206 (KPHVNIGTIG…AVDESVPDPV (197 aa)). Residues 19–26 (GHVDHGKT) are G1. 19-26 (GHVDHGKT) is a GTP binding site. Mg(2+) is bound at residue threonine 26. Residues 62–66 (GITIN) are G2. The tract at residues 83–86 (DAPG) is G3. GTP is bound by residues 83–87 (DAPGH) and 138–141 (NKSD). Residues 138 to 141 (NKSD) are G4. Positions 176–178 (SGL) are G5.

Belongs to the TRAFAC class translation factor GTPase superfamily. Classic translation factor GTPase family. EF-Tu/EF-1A subfamily. Monomer.

It localises to the cytoplasm. It catalyses the reaction GTP + H2O = GDP + phosphate + H(+). GTP hydrolase that promotes the GTP-dependent binding of aminoacyl-tRNA to the A-site of ribosomes during protein biosynthesis. This chain is Elongation factor Tu, found in Paenarthrobacter aurescens (strain TC1).